The primary structure comprises 459 residues: Bifunctional protein GlmU (459 aa).

The tract at residues 1-230 (MSNRFAVILA…FDETLGVNDR (230 aa)) is pyrophosphorylase. Residues 9-12 (LAAG), Lys23, Gln73, and 78-79 (GT) contribute to the UDP-N-acetyl-alpha-D-glucosamine site. Mg(2+) is bound at residue Asp103. UDP-N-acetyl-alpha-D-glucosamine contacts are provided by Gly140, Glu155, Asn170, and Asn228. Residue Asn228 coordinates Mg(2+). Residues 231–251 (VALSQAEIIMKNRINRKNMVN) form a linker region. Residues 252 to 459 (GVTIIDPSNT…VDQLLNKKKS (208 aa)) are N-acetyltransferase. UDP-N-acetyl-alpha-D-glucosamine is bound by residues Arg333 and Lys351. His363 functions as the Proton acceptor in the catalytic mechanism. Positions 366 and 377 each coordinate UDP-N-acetyl-alpha-D-glucosamine. Acetyl-CoA is bound by residues 386 to 387 (NY), Ala423, and Arg440.

It in the N-terminal section; belongs to the N-acetylglucosamine-1-phosphate uridyltransferase family. This sequence in the C-terminal section; belongs to the transferase hexapeptide repeat family. Homotrimer. Mg(2+) serves as cofactor.

The protein resides in the cytoplasm. The catalysed reaction is alpha-D-glucosamine 1-phosphate + acetyl-CoA = N-acetyl-alpha-D-glucosamine 1-phosphate + CoA + H(+). The enzyme catalyses N-acetyl-alpha-D-glucosamine 1-phosphate + UTP + H(+) = UDP-N-acetyl-alpha-D-glucosamine + diphosphate. It participates in nucleotide-sugar biosynthesis; UDP-N-acetyl-alpha-D-glucosamine biosynthesis; N-acetyl-alpha-D-glucosamine 1-phosphate from alpha-D-glucosamine 6-phosphate (route II): step 2/2. Its pathway is nucleotide-sugar biosynthesis; UDP-N-acetyl-alpha-D-glucosamine biosynthesis; UDP-N-acetyl-alpha-D-glucosamine from N-acetyl-alpha-D-glucosamine 1-phosphate: step 1/1. It functions in the pathway bacterial outer membrane biogenesis; LPS lipid A biosynthesis. Catalyzes the last two sequential reactions in the de novo biosynthetic pathway for UDP-N-acetylglucosamine (UDP-GlcNAc). The C-terminal domain catalyzes the transfer of acetyl group from acetyl coenzyme A to glucosamine-1-phosphate (GlcN-1-P) to produce N-acetylglucosamine-1-phosphate (GlcNAc-1-P), which is converted into UDP-GlcNAc by the transfer of uridine 5-monophosphate (from uridine 5-triphosphate), a reaction catalyzed by the N-terminal domain. The sequence is that of Bifunctional protein GlmU from Bacillus anthracis (strain A0248).